We begin with the raw amino-acid sequence, 316 residues long: UDP-N-acetylenolpyruvoylglucosamine reductase (316 aa).

Residues 27–225 enclose the FAD-binding PCMH-type domain; sequence VGGKAERFYR…KTAINALLKK (199 aa). Residue R190 is part of the active site. Catalysis depends on S239, which acts as the Proton donor. Residue E309 is part of the active site.

This sequence belongs to the MurB family. It depends on FAD as a cofactor.

It localises to the cytoplasm. It carries out the reaction UDP-N-acetyl-alpha-D-muramate + NADP(+) = UDP-N-acetyl-3-O-(1-carboxyvinyl)-alpha-D-glucosamine + NADPH + H(+). It functions in the pathway cell wall biogenesis; peptidoglycan biosynthesis. Its function is as follows. Cell wall formation. The chain is UDP-N-acetylenolpyruvoylglucosamine reductase from Coxiella burnetii (strain CbuG_Q212) (Coxiella burnetii (strain Q212)).